The sequence spans 193 residues: Crossover junction endodeoxyribonuclease RuvC (193 aa).

Active-site residues include D7, E68, and D141. Mg(2+)-binding residues include D7, E68, and D141. The disordered stretch occupies residues 174 to 193; that stretch reads RQWAQATQHATRRRGVRRGM. Basic residues predominate over residues 183-193; it reads ATRRRGVRRGM.

It belongs to the RuvC family. In terms of assembly, homodimer which binds Holliday junction (HJ) DNA. The HJ becomes 2-fold symmetrical on binding to RuvC with unstacked arms; it has a different conformation from HJ DNA in complex with RuvA. In the full resolvosome a probable DNA-RuvA(4)-RuvB(12)-RuvC(2) complex forms which resolves the HJ. It depends on Mg(2+) as a cofactor.

Its subcellular location is the cytoplasm. It catalyses the reaction Endonucleolytic cleavage at a junction such as a reciprocal single-stranded crossover between two homologous DNA duplexes (Holliday junction).. The RuvA-RuvB-RuvC complex processes Holliday junction (HJ) DNA during genetic recombination and DNA repair. Endonuclease that resolves HJ intermediates. Cleaves cruciform DNA by making single-stranded nicks across the HJ at symmetrical positions within the homologous arms, yielding a 5'-phosphate and a 3'-hydroxyl group; requires a central core of homology in the junction. The consensus cleavage sequence is 5'-(A/T)TT(C/G)-3'. Cleavage occurs on the 3'-side of the TT dinucleotide at the point of strand exchange. HJ branch migration catalyzed by RuvA-RuvB allows RuvC to scan DNA until it finds its consensus sequence, where it cleaves and resolves the cruciform DNA. The sequence is that of Crossover junction endodeoxyribonuclease RuvC from Bifidobacterium animalis subsp. lactis (strain AD011).